The primary structure comprises 596 residues: Elongation factor 4 (596 aa).

One can recognise a tr-type G domain in the interval 2-184; the sequence is KHIRNFSIIA…VIVAKIPPPE (183 aa). GTP-binding positions include 14–19 and 131–134; these read DHGKST and NKID.

It belongs to the TRAFAC class translation factor GTPase superfamily. Classic translation factor GTPase family. LepA subfamily.

The protein resides in the cell inner membrane. It carries out the reaction GTP + H2O = GDP + phosphate + H(+). Functionally, required for accurate and efficient protein synthesis under certain stress conditions. May act as a fidelity factor of the translation reaction, by catalyzing a one-codon backward translocation of tRNAs on improperly translocated ribosomes. Back-translocation proceeds from a post-translocation (POST) complex to a pre-translocation (PRE) complex, thus giving elongation factor G a second chance to translocate the tRNAs correctly. Binds to ribosomes in a GTP-dependent manner. This is Elongation factor 4 from Shewanella sp. (strain W3-18-1).